A 119-amino-acid polypeptide reads, in one-letter code: Protein TusC (119 aa).

Belongs to the DsrF/TusC family. As to quaternary structure, heterohexamer, formed by a dimer of trimers. The hexameric TusBCD complex contains 2 copies each of TusB, TusC and TusD. The TusBCD complex interacts with TusE.

It localises to the cytoplasm. Part of a sulfur-relay system required for 2-thiolation of 5-methylaminomethyl-2-thiouridine (mnm(5)s(2)U) at tRNA wobble positions. The protein is Protein TusC of Klebsiella pneumoniae subsp. pneumoniae (strain ATCC 700721 / MGH 78578).